A 256-amino-acid chain; its full sequence is uncharacterized protein (256 aa).

A disordered region spans residues 1 to 23 (MIPPCENAPHIIYHESQRGTRDR). The segment covering 12 to 23 (IYHESQRGTRDR) has biased composition (basic and acidic residues).

This is an uncharacterized protein from Homo sapiens (Human).